The following is a 517-amino-acid chain: Crotonobetaine/carnitine--CoA ligase (517 aa).

This sequence belongs to the ATP-dependent AMP-binding enzyme family.

The enzyme catalyses 4-(trimethylamino)butanoate + ATP + CoA = 4-(trimethylamino)butanoyl-CoA + AMP + diphosphate. It carries out the reaction crotonobetaine + ATP + CoA = crotonobetainyl-CoA + AMP + diphosphate. The catalysed reaction is (R)-carnitine + ATP + CoA = (R)-carnitinyl-CoA + AMP + diphosphate. Its pathway is amine and polyamine metabolism; carnitine metabolism. Catalyzes the transfer of CoA to carnitine, generating the initial carnitinyl-CoA needed for the CaiB reaction cycle. Also has activity toward crotonobetaine and gamma-butyrobetaine. The polypeptide is Crotonobetaine/carnitine--CoA ligase (Escherichia coli O8 (strain IAI1)).